A 324-amino-acid chain; its full sequence is Calpain-2 catalytic subunit (324 aa).

A domain III region spans residues 1 to 138 (YPNTFWMNPQ…KKADYQVVDD (138 aa)). Positions 139-153 (EIEADLEENDASEDD) are linker. Residues 158–324 (FRRLFAQLAG…LISWLCFSVL (167 aa)) form a domain IV region. The Ca(2+) site is built by alanine 166, aspartate 169, glutamate 171, glutamate 176, aspartate 209, aspartate 211, serine 213, lysine 215, glutamate 220, aspartate 239, aspartate 241, serine 243, threonine 245, glutamate 250, aspartate 282, and asparagine 285. EF-hand domains follow at residues 190 to 224 (DIKS…FYIL) and 226 to 261 (TKIQ…AGFK).

This sequence belongs to the peptidase C2 family. As to quaternary structure, forms a heterodimer with a small (regulatory) subunit (CAPNS1). Interacts with CPEB3; this leads to cleavage of CPEB3. Ca(2+) is required as a cofactor. In terms of tissue distribution, ubiquitous.

The protein localises to the cytoplasm. It localises to the cell membrane. It catalyses the reaction Broad endopeptidase specificity.. Its activity is regulated as follows. Activated by 200-1000 micromolar concentrations of calcium and inhibited by calpastatin. Functionally, calcium-regulated non-lysosomal thiol-protease which catalyzes limited proteolysis of substrates involved in cytoskeletal remodeling and signal transduction. Proteolytically cleaves MYOC at 'Arg-226'. Proteolytically cleaves CPEB3 following neuronal stimulation which abolishes CPEB3 translational repressor activity, leading to translation of CPEB3 target mRNAs. In Sus scrofa (Pig), this protein is Calpain-2 catalytic subunit (CAPN2).